We begin with the raw amino-acid sequence, 464 residues long: Sulfoacetaldehyde dehydrogenase (acylating) (464 aa).

Residue cysteine 241 is the Nucleophile of the active site.

The protein belongs to the aldehyde dehydrogenase family.

It carries out the reaction sulfoacetaldehyde + NADP(+) + CoA = sulfoacetyl-CoA + NADPH + H(+). Functionally, involved in the degradation of sulfoacetate. Catalyzes the conversion of sulfoacetyl-CoA and NADPH to sulfoacetaldehyde, CoA and NADP(+). A much lower level of activity (1%) is observed when NADP(+) is replaced with NAD(+). This Bilophila wadsworthia (strain 3_1_6) protein is Sulfoacetaldehyde dehydrogenase (acylating).